The sequence spans 197 residues: Small ribosomal subunit protein uS4A (197 aa).

The S4 RNA-binding domain occupies 107 to 181 (RRLQTQVYKL…VARRNAARKA (75 aa)). Residues 160 to 197 (PTSPFGGARPGRVARRNAARKAEASGEAADEADEADEE) are disordered. K180 is covalently cross-linked (Glycyl lysine isopeptide (Lys-Gly) (interchain with G-Cter in ubiquitin)). S184 carries the phosphoserine modification. Positions 187 to 197 (AADEADEADEE) are enriched in acidic residues.

This sequence belongs to the universal ribosomal protein uS4 family. As to quaternary structure, component of the small ribosomal subunit (SSU). Mature yeast ribosomes consist of a small (40S) and a large (60S) subunit. The 40S small subunit contains 1 molecule of ribosomal RNA (18S rRNA) and 33 different proteins (encoded by 57 genes). The large 60S subunit contains 3 rRNA molecules (25S, 5.8S and 5S rRNA) and 46 different proteins (encoded by 81 genes). Interacts with snoRNA U3. uS11 interacts with MPP10. Component of the ribosomal small subunit (SSU) processome composed of at least 40 protein subunits and snoRNA U3.

It localises to the cytoplasm. The protein localises to the nucleus. It is found in the nucleolus. Functionally, component of the ribosome, a large ribonucleoprotein complex responsible for the synthesis of proteins in the cell. The small ribosomal subunit (SSU) binds messenger RNAs (mRNAs) and translates the encoded message by selecting cognate aminoacyl-transfer RNA (tRNA) molecules. The large subunit (LSU) contains the ribosomal catalytic site termed the peptidyl transferase center (PTC), which catalyzes the formation of peptide bonds, thereby polymerizing the amino acids delivered by tRNAs into a polypeptide chain. The nascent polypeptides leave the ribosome through a tunnel in the LSU and interact with protein factors that function in enzymatic processing, targeting, and the membrane insertion of nascent chains at the exit of the ribosomal tunnel. uS4 is involved in nucleolar processing of pre-18S ribosomal RNA and ribosome assembly. The chain is Small ribosomal subunit protein uS4A from Saccharomyces cerevisiae (strain ATCC 204508 / S288c) (Baker's yeast).